Here is a 383-residue protein sequence, read N- to C-terminus: Succinyl-diaminopimelate desuccinylase (383 aa).

Position 72 (His72) interacts with Zn(2+). Asp74 is an active-site residue. Asp105 is a binding site for Zn(2+). Glu137 serves as the catalytic Proton acceptor. 3 residues coordinate Zn(2+): Glu138, Glu167, and His352.

This sequence belongs to the peptidase M20A family. DapE subfamily. As to quaternary structure, homodimer. Requires Zn(2+) as cofactor. It depends on Co(2+) as a cofactor.

The enzyme catalyses N-succinyl-(2S,6S)-2,6-diaminopimelate + H2O = (2S,6S)-2,6-diaminopimelate + succinate. It functions in the pathway amino-acid biosynthesis; L-lysine biosynthesis via DAP pathway; LL-2,6-diaminopimelate from (S)-tetrahydrodipicolinate (succinylase route): step 3/3. Catalyzes the hydrolysis of N-succinyl-L,L-diaminopimelic acid (SDAP), forming succinate and LL-2,6-diaminopimelate (DAP), an intermediate involved in the bacterial biosynthesis of lysine and meso-diaminopimelic acid, an essential component of bacterial cell walls. The protein is Succinyl-diaminopimelate desuccinylase of Ehrlichia ruminantium (strain Welgevonden).